Here is an 872-residue protein sequence, read N- to C-terminus: Alanine--tRNA ligase (872 aa).

Zn(2+)-binding residues include histidine 567, histidine 571, cysteine 669, and histidine 673.

The protein belongs to the class-II aminoacyl-tRNA synthetase family. Requires Zn(2+) as cofactor.

The protein resides in the cytoplasm. The catalysed reaction is tRNA(Ala) + L-alanine + ATP = L-alanyl-tRNA(Ala) + AMP + diphosphate. Catalyzes the attachment of alanine to tRNA(Ala) in a two-step reaction: alanine is first activated by ATP to form Ala-AMP and then transferred to the acceptor end of tRNA(Ala). Also edits incorrectly charged Ser-tRNA(Ala) and Gly-tRNA(Ala) via its editing domain. The polypeptide is Alanine--tRNA ligase (Streptococcus pyogenes serotype M5 (strain Manfredo)).